We begin with the raw amino-acid sequence, 233 residues long: Phosphoribosylformylglycinamidine synthase subunit PurQ (233 aa).

In terms of domain architecture, Glutamine amidotransferase type-1 spans 3 to 233; it reads AAILVFPGIN…GLAQHLEKAA (231 aa). Cys-87 acts as the Nucleophile in catalysis. Active-site residues include His-204 and Glu-206.

In terms of assembly, part of the FGAM synthase complex composed of 1 PurL, 1 PurQ and 2 PurS subunits.

It localises to the cytoplasm. The catalysed reaction is N(2)-formyl-N(1)-(5-phospho-beta-D-ribosyl)glycinamide + L-glutamine + ATP + H2O = 2-formamido-N(1)-(5-O-phospho-beta-D-ribosyl)acetamidine + L-glutamate + ADP + phosphate + H(+). It catalyses the reaction L-glutamine + H2O = L-glutamate + NH4(+). It participates in purine metabolism; IMP biosynthesis via de novo pathway; 5-amino-1-(5-phospho-D-ribosyl)imidazole from N(2)-formyl-N(1)-(5-phospho-D-ribosyl)glycinamide: step 1/2. Part of the phosphoribosylformylglycinamidine synthase complex involved in the purines biosynthetic pathway. Catalyzes the ATP-dependent conversion of formylglycinamide ribonucleotide (FGAR) and glutamine to yield formylglycinamidine ribonucleotide (FGAM) and glutamate. The FGAM synthase complex is composed of three subunits. PurQ produces an ammonia molecule by converting glutamine to glutamate. PurL transfers the ammonia molecule to FGAR to form FGAM in an ATP-dependent manner. PurS interacts with PurQ and PurL and is thought to assist in the transfer of the ammonia molecule from PurQ to PurL. The chain is Phosphoribosylformylglycinamidine synthase subunit PurQ from Bradyrhizobium diazoefficiens (strain JCM 10833 / BCRC 13528 / IAM 13628 / NBRC 14792 / USDA 110).